The primary structure comprises 240 residues: MGRGKIVIRRIDNSTSRQVTFSKRRNGIFKKAKELAILCDAEVGLMIFSSTGRLYEYSSTSMKSVIDRYGKSKDEQQAVANPNSELKFWQREAASLRQQLHNLQENHRQLMGEDLSGLNVKELQSLENQLEISLRSVRTKKDHVLIDEIHELNRKGSLVHQENMELYKKISLIRQENAELYKKIYETEGPSEVNRDSPTPYNFAVIEKTNVPVQLGLSTLPQHSDAEQSTAPKLGLQLNP.

The region spanning 1 to 61 (MGRGKIVIRR…GRLYEYSSTS (61 aa)) is the MADS-box domain. In terms of domain architecture, K-box spans 86-176 (LKFWQREAAS…YKKISLIRQE (91 aa)). The span at 220–231 (LPQHSDAEQSTA) shows a compositional bias: polar residues. The segment at 220–240 (LPQHSDAEQSTAPKLGLQLNP) is disordered.

Ubiquitous.

The protein localises to the nucleus. Functionally, probable transcription factor. This Oryza sativa subsp. japonica (Rice) protein is MADS-box transcription factor 27 (MADS27).